A 694-amino-acid polypeptide reads, in one-letter code: Elongation factor G 2 (694 aa).

In terms of domain architecture, tr-type G spans 8–282 (TAIRNIGIMA…AVVSYLPSPL (275 aa)). Residues 17–24 (AHIDAGKT), 81–85 (DTPGH), and 135–138 (NKMD) each bind GTP.

This sequence belongs to the TRAFAC class translation factor GTPase superfamily. Classic translation factor GTPase family. EF-G/EF-2 subfamily.

Its subcellular location is the cytoplasm. Its function is as follows. Catalyzes the GTP-dependent ribosomal translocation step during translation elongation. During this step, the ribosome changes from the pre-translocational (PRE) to the post-translocational (POST) state as the newly formed A-site-bound peptidyl-tRNA and P-site-bound deacylated tRNA move to the P and E sites, respectively. Catalyzes the coordinated movement of the two tRNA molecules, the mRNA and conformational changes in the ribosome. This Syntrophomonas wolfei subsp. wolfei (strain DSM 2245B / Goettingen) protein is Elongation factor G 2.